A 648-amino-acid chain; its full sequence is MMTTLQNKEECGKGPKRIFAPPAQKSYSLLPCSPNSPKEETPGISSPETEARISLPKASLKKKEEKATMKNVPSREQEKKRKAQINKQAEKKEKEKSSLTNAEFEEIVQIVLQKSLQECLGMGSGLDFAETSCAQPVVSTQSDKEPGITASATDTDNANGEEVPHTQEISVSWEGEAAPEIRTSKLGQPDPAPSKKKSNRLTLSKRKKEAHEKVEKTQGGHEHRQEDRLKKTVQDHSQIRDQQKGEISGFGQCLVWVQCSFPNCGKWRRLCGNIDPSVLPDNWSCDQNTDVQYNRCDIPEETWTGLESDVAYASYIPGSIIWAKQYGYPWWPGMIESDPDLGEYFLFTSHLDSLPSKYHVTFFGETVSRAWIPVNMLKNFQELSLELSVMKKRRNDCSQKLGVALMMAQEAEQISIQERVNLFGFWSRFNGSNSNGERKDLQLSGLNSPGSCLEKKEKEEELEKEEGEKTDPILPIRKRVKIQTQKTKPRGLGGDAGTADGRGRTLQRKIMKRSLGRKSTAPPAPRMGRKEGQGNSDSDQPGPKKKFKAPQSKALAASFSEGKEVRTVPKNLGLSACKGACPSSAKEEPRHREPLTQEAGSVPLEDEASSDLDLEQLMEDVGRELGQSGELQHSNSDGEDFPVALFGK.

2 disordered regions span residues 1 to 103 (MMTT…TNAE) and 137 to 237 (VVST…QDHS). 2 stretches are compositionally biased toward basic and acidic residues: residues 61–79 (KKKE…EQEK) and 88–97 (QAEKKEKEKS). Positions 74 to 109 (SREQEKKRKAQINKQAEKKEKEKSSLTNAEFEEIVQ) form a coiled coil. Residues 194–208 (SKKKSNRLTLSKRKK) are compositionally biased toward basic residues. Over residues 209–237 (EAHEKVEKTQGGHEHRQEDRLKKTVQDHS) the composition is skewed to basic and acidic residues. The CW-type zinc finger occupies 250–304 (FGQCLVWVQCSFPNCGKWRRLCGNIDPSVLPDNWSCDQNTDVQYNRCDIPEETWT). Zn(2+) is bound by residues Cys259, Cys264, Cys285, and Cys296. The PWWP domain occupies 317-383 (PGSIIWAKQY…VNMLKNFQEL (67 aa)). Residues 436–648 (GERKDLQLSG…EDFPVALFGK (213 aa)) are disordered. Residues 453–471 (LEKKEKEEELEKEEGEKTD) show a composition bias toward basic and acidic residues. The segment covering 505–516 (TLQRKIMKRSLG) has biased composition (basic residues). The segment covering 585-595 (AKEEPRHREPL) has biased composition (basic and acidic residues). Residues 604-618 (LEDEASSDLDLEQLM) show a composition bias toward acidic residues. Ser636 is subject to Phosphoserine.

In terms of tissue distribution, testis.

It localises to the nucleus. The protein localises to the chromosome. In terms of biological role, dual histone methylation reader specific for PRDM9-catalyzed histone marks (H3K4me3 and H3K36me3). Facilitates the repair of PRDM9-induced meiotic double-strand breaks (DSBs). Essential for male fertility and spermatogenesis. Required for meiosis prophase I progression in male but not in female germ cells. The protein is Zinc finger CW-type PWWP domain protein 1 (ZCWPW1) of Homo sapiens (Human).